The chain runs to 496 residues: Probable cytosol aminopeptidase (496 aa).

2 residues coordinate Mn(2+): K266 and D271. Residue K278 is part of the active site. Residues D290, D349, and E351 each coordinate Mn(2+). The active site involves R353.

The protein belongs to the peptidase M17 family. The cofactor is Mn(2+).

It localises to the cytoplasm. It catalyses the reaction Release of an N-terminal amino acid, Xaa-|-Yaa-, in which Xaa is preferably Leu, but may be other amino acids including Pro although not Arg or Lys, and Yaa may be Pro. Amino acid amides and methyl esters are also readily hydrolyzed, but rates on arylamides are exceedingly low.. The catalysed reaction is Release of an N-terminal amino acid, preferentially leucine, but not glutamic or aspartic acids.. In terms of biological role, presumably involved in the processing and regular turnover of intracellular proteins. Catalyzes the removal of unsubstituted N-terminal amino acids from various peptides. The sequence is that of Probable cytosol aminopeptidase from Trichodesmium erythraeum (strain IMS101).